The sequence spans 455 residues: Differentiation-associated protein 1 (455 aa).

A signal peptide spans 1-21 (MKFKLFLLVFFVFLLPYLSQS). The segment at 349 to 434 (IGSSSSSSSS…SDDDLGNPSS (86 aa)) is disordered. The span at 351-423 (SSSSSSSSSS…KSNHTSSESS (73 aa)) shows a compositional bias: low complexity. Serine 433 carries the GPI-like-anchor amidated serine lipid modification. A propeptide spans 434-455 (SSSILSVSKLIILLISIILYCF) (removed in mature form).

The protein resides in the cell membrane. Functionally, plays a role in differentiation. The sequence is that of Differentiation-associated protein 1 (dia1) from Dictyostelium discoideum (Social amoeba).